The following is a 710-amino-acid chain: Aminopeptidase P2 (710 aa).

A chloroplast-targeting transit peptide spans 1–79 (MIPLTLSSPS…IRKAQTKVVV (79 aa)). A peptide contacts are provided by Arg-147 and His-486. Residues Asp-506, Asp-517, and His-580 each contribute to the Mn(2+) site. Positions 580, 589, and 614 each coordinate a peptide. 2 residues coordinate Mn(2+): Glu-614 and Glu-628.

This sequence belongs to the peptidase M24B family. In terms of assembly, homodimer. Mn(2+) serves as cofactor.

It is found in the plastid. The protein localises to the chloroplast. It carries out the reaction Release of any N-terminal amino acid, including proline, that is linked to proline, even from a dipeptide or tripeptide.. Functionally, catalyzes the removal of a penultimate prolyl residue from the N-termini of peptides, such as Arg-Pro-Pro. This is Aminopeptidase P2 from Arabidopsis thaliana (Mouse-ear cress).